The sequence spans 391 residues: Probable sugar efflux transporter (391 aa).

Helical transmembrane passes span 16-36 (VFVF…PVAL), 51-71 (VGLM…PLML), 82-102 (LLFL…AWNF), 103-123 (WVLL…WSIT), 138-158 (QALG…LPLG), 170-190 (TFGV…KLLP), 210-230 (PLLV…FTTY), 247-267 (ITTL…FLFG), 277-297 (FIAF…VFKN), 300-320 (WVIF…TIAL), 338-358 (IFSG…SIVI), and 361-381 (LGLE…LFWL).

Belongs to the major facilitator superfamily. SotB (TC 2.A.1.2) family.

It localises to the cell inner membrane. Functionally, involved in the efflux of sugars. The physiological role may be the reduction of the intracellular concentration of toxic sugars or sugar metabolites. In Helicobacter pylori (strain P12), this protein is Probable sugar efflux transporter.